Here is a 64-residue protein sequence, read N- to C-terminus: Cecropin-A (64 aa).

A signal peptide spans 1–22; it reads MNFSRIFFFVFACLTALAMVNA. Residues 23 to 26 constitute a propeptide, removed by a dipeptidylpeptidase; that stretch reads APEP. Lys63 carries the post-translational modification Lysine amide.

Belongs to the cecropin family. Post-translationally, a protein with the same sequence as cecropin A, but lacking the carboxyl blocking group, has been isolated and called cecropin C.

It localises to the secreted. In terms of biological role, cecropins have lytic and antibacterial activity against several Gram-positive and Gram-negative bacteria. The chain is Cecropin-A from Hyalophora cecropia (Cecropia moth).